The sequence spans 365 residues: Cobalt-precorrin-5B C(1)-methyltransferase (365 aa).

It belongs to the CbiD family.

The enzyme catalyses Co-precorrin-5B + S-adenosyl-L-methionine = Co-precorrin-6A + S-adenosyl-L-homocysteine. It participates in cofactor biosynthesis; adenosylcobalamin biosynthesis; cob(II)yrinate a,c-diamide from sirohydrochlorin (anaerobic route): step 6/10. Functionally, catalyzes the methylation of C-1 in cobalt-precorrin-5B to form cobalt-precorrin-6A. This chain is Cobalt-precorrin-5B C(1)-methyltransferase, found in Methanococcus maripaludis (strain C6 / ATCC BAA-1332).